The primary structure comprises 337 residues: uncharacterized protein (337 aa).

One can recognise a MurNAc-LAA domain in the interval 3-174; that stretch reads IAVRGGHNFK…IGKLIAEAIN (172 aa).

This sequence to C.perfringens pIP404 ORF10.

This is an uncharacterized protein from Clostridium perfringens (strain 13 / Type A).